The chain runs to 318 residues: tRNA-cytidine(32) 2-sulfurtransferase (318 aa).

The PP-loop motif signature appears at 52 to 57; it reads SGGKDS. [4Fe-4S] cluster is bound by residues Cys127, Cys130, and Cys218.

It belongs to the TtcA family. As to quaternary structure, homodimer. It depends on Mg(2+) as a cofactor. [4Fe-4S] cluster is required as a cofactor.

It is found in the cytoplasm. It carries out the reaction cytidine(32) in tRNA + S-sulfanyl-L-cysteinyl-[cysteine desulfurase] + AH2 + ATP = 2-thiocytidine(32) in tRNA + L-cysteinyl-[cysteine desulfurase] + A + AMP + diphosphate + H(+). Its pathway is tRNA modification. In terms of biological role, catalyzes the ATP-dependent 2-thiolation of cytidine in position 32 of tRNA, to form 2-thiocytidine (s(2)C32). The sulfur atoms are provided by the cysteine/cysteine desulfurase (IscS) system. This chain is tRNA-cytidine(32) 2-sulfurtransferase, found in Actinobacillus pleuropneumoniae serotype 7 (strain AP76).